Consider the following 238-residue polypeptide: Ribonuclease PH (238 aa).

Residues Arg-86 and 124 to 126 contribute to the phosphate site; that span reads GTR.

This sequence belongs to the RNase PH family. As to quaternary structure, homohexameric ring arranged as a trimer of dimers.

The catalysed reaction is tRNA(n+1) + phosphate = tRNA(n) + a ribonucleoside 5'-diphosphate. Functionally, phosphorolytic 3'-5' exoribonuclease that plays an important role in tRNA 3'-end maturation. Removes nucleotide residues following the 3'-CCA terminus of tRNAs; can also add nucleotides to the ends of RNA molecules by using nucleoside diphosphates as substrates, but this may not be physiologically important. Probably plays a role in initiation of 16S rRNA degradation (leading to ribosome degradation) during starvation. This Vibrio vulnificus (strain CMCP6) protein is Ribonuclease PH.